The sequence spans 157 residues: Transcription factor HES-2 (157 aa).

Positions 13–70 (LRKNLKPLLEKRRRARINESLSQLKGLVLPLLGAETSRSSKLEKADILEMTVRFLQEQ) constitute a bHLH domain. Residues 86-119 (YLEGYRACLARLARVLPACSVLEPAVSARLLEHL) form the Orange domain. A disordered region spans residues 124–157 (VSDDSPSLTLPPAPAPAPSPPVPPPGSSGLWRPW). A compositionally biased stretch (pro residues) spans 132–149 (TLPPAPAPAPSPPVPPPG). Residues 154 to 157 (WRPW) carry the WRPW motif motif.

Transcription repression requires formation of a complex with a corepressor protein of the Groucho/TLE family.

Its subcellular location is the nucleus. Functionally, transcriptional repressor of genes that require a bHLH protein for their transcription. The chain is Transcription factor HES-2 (Hes2) from Mus musculus (Mouse).